The following is a 178-amino-acid chain: Protein FAM89A (178 aa).

This sequence belongs to the FAM89 family.

This chain is Protein FAM89A (FAM89A), found in Bos taurus (Bovine).